The following is a 79-amino-acid chain: MORN repeat-containing protein 2 (79 aa).

MORN repeat units lie at residues 15 to 36 (YEGQ…PNGA) and 38 to 55 (YTGN…EYTD).

It is found in the cytoplasmic vesicle. It localises to the secretory vesicle. The protein localises to the acrosome. Its subcellular location is the nucleus. Functionally, might have a role in spermatogenesis. The protein is MORN repeat-containing protein 2 of Homo sapiens (Human).